The following is a 21-amino-acid chain: Phenol-soluble modulin alpha 1 peptide (21 aa).

Belongs to the phenol-soluble modulin alpha peptides family.

Peptide which can recruit, activate and subsequently lyse human neutrophils, thus eliminating the main cellular defense against infection. This is Phenol-soluble modulin alpha 1 peptide (psmA1) from Staphylococcus aureus (strain Mu3 / ATCC 700698).